The primary structure comprises 250 residues: 3-deoxy-manno-octulosonate cytidylyltransferase (250 aa).

The protein belongs to the KdsB family.

Its subcellular location is the cytoplasm. It carries out the reaction 3-deoxy-alpha-D-manno-oct-2-ulosonate + CTP = CMP-3-deoxy-beta-D-manno-octulosonate + diphosphate. It participates in nucleotide-sugar biosynthesis; CMP-3-deoxy-D-manno-octulosonate biosynthesis; CMP-3-deoxy-D-manno-octulosonate from 3-deoxy-D-manno-octulosonate and CTP: step 1/1. It functions in the pathway bacterial outer membrane biogenesis; lipopolysaccharide biosynthesis. Its function is as follows. Activates KDO (a required 8-carbon sugar) for incorporation into bacterial lipopolysaccharide in Gram-negative bacteria. This is 3-deoxy-manno-octulosonate cytidylyltransferase from Francisella philomiragia subsp. philomiragia (strain ATCC 25017 / CCUG 19701 / FSC 153 / O#319-036).